Reading from the N-terminus, the 784-residue chain is Probable phosphoketolase (784 aa).

Belongs to the XFP family. Thiamine diphosphate serves as cofactor.

The chain is Probable phosphoketolase from Rhodopseudomonas palustris (strain HaA2).